The following is a 460-amino-acid chain: Malonyl-coenzyme A:anthocyanin 3-O-glucoside-6''-O-malonyltransferase (460 aa).

Residues histidine 173 and aspartate 400 each act as proton acceptor in the active site.

The protein belongs to the plant acyltransferase family.

It catalyses the reaction an anthocyanidin 3-O-beta-D-glucoside + malonyl-CoA = an anthocyanidin 3-O-(6-O-malonyl-beta-D-glucoside) + CoA. Its activity is regulated as follows. Completely inhibited by 5 mM N-ethylmaleimide or 0.1 mM Cu(2+). Partially inhibited by 0.1 mM Fe(2+) or 0.1 mM Hg(2+). In terms of biological role, catalyzes the transfer of the malonyl group from malonyl-CoA to pelargonidin 3-O-glucoside to produce pelargonidin 3-O-6''-O-malonylglucoside. Can also transfer the malonyl group from malonyl-CoA to cyanidin 3-O-glucoside, delphinidin 3-O-glucoside and quercetin 3-O-glucoside. In Dahlia pinnata (Pinnate dahlia), this protein is Malonyl-coenzyme A:anthocyanin 3-O-glucoside-6''-O-malonyltransferase.